Here is a 126-residue protein sequence, read N- to C-terminus: C-type natriuretic peptide 2 (126 aa).

A signal peptide spans 1–22 (MAVCSSSSLILLTVFLSVAVET). The propeptide occupies 23–102 (RPSSDRDEEQ…REKTRRWGRK (80 aa)). The segment at 44–80 (SLILAPPTSNDSTEGSSGSPEPPTPSEAPVLIHGDRG) is disordered. An intrachain disulfide couples Cys-110 to Cys-126.

It belongs to the natriuretic peptide family. In terms of tissue distribution, brain and spinal cord.

The protein localises to the secreted. Exhibits natriuretic and vasodepressant activity. Has cGMP-stimulating activity. May help to regulate body fluid homeostasis in a variety of aquatic environments. The chain is C-type natriuretic peptide 2 from Oryzias latipes (Japanese rice fish).